The following is a 185-amino-acid chain: MIDEALFEAEEKMEKAVTVAKDDLGSIRTGRANPGMFNRIGIDYYGAFTPITQLASINVPEARLVVVKPYEASQLGAIETAIRNSDLGVNPSNDGNLIRISVPQLTEERRRELVKQAKSKGEDAKVSVRNVRRKAMDELSRIQKDGEAGEDEVGRAEKELDKTTARYVAQVDELVKHKEAELLEV.

The interval 141–160 (RIQKDGEAGEDEVGRAEKEL) is disordered.

This sequence belongs to the RRF family.

The protein resides in the cytoplasm. In terms of biological role, responsible for the release of ribosomes from messenger RNA at the termination of protein biosynthesis. May increase the efficiency of translation by recycling ribosomes from one round of translation to another. The polypeptide is Ribosome-recycling factor (Rhodococcus jostii (strain RHA1)).